The chain runs to 214 residues: MSFEKYKTIIQKYNQIFNLTRLDSDDKIYQNFFLDSLAPYKELDFFTQNTNLKLIDIGSGSGIPGVVLKIIFKNLNLTLLEANQKRCEFLKILTQELGLNDVLIWNMRAEDLTQSMRESFDIATSRAVASLDKILEISAAFVKVNGYLIQPKSIKFYEEELKAKNIIKTLYLERIALKDFWENDYHHLVGVYLKKQITPLQFPRPWNLILKKPL.

S-adenosyl-L-methionine-binding positions include G58, 109 to 110, and R126; that span reads AE.

This sequence belongs to the methyltransferase superfamily. RNA methyltransferase RsmG family.

The protein resides in the cytoplasm. Specifically methylates the N7 position of a guanine in 16S rRNA. The chain is Ribosomal RNA small subunit methyltransferase G from Ureaplasma parvum serovar 3 (strain ATCC 700970).